The chain runs to 277 residues: Small ribosomal subunit protein uS3 (277 aa).

A KH type-2 domain is found at 38–106 (IRRLLATGLE…QVQLNILEVK (69 aa)). The segment at 217–277 (AGVEAGRGAP…SAPSAETTES (61 aa)) is disordered. Basic and acidic residues predominate over residues 225-235 (APDRPRRERPA). A compositionally biased stretch (low complexity) spans 242-261 (SGSSGTTATSTEAGRAAAET).

The protein belongs to the universal ribosomal protein uS3 family. Part of the 30S ribosomal subunit. Forms a tight complex with proteins S10 and S14.

Its function is as follows. Binds the lower part of the 30S subunit head. Binds mRNA in the 70S ribosome, positioning it for translation. This is Small ribosomal subunit protein uS3 from Mycobacteroides abscessus (strain ATCC 19977 / DSM 44196 / CCUG 20993 / CIP 104536 / JCM 13569 / NCTC 13031 / TMC 1543 / L948) (Mycobacterium abscessus).